The sequence spans 93 residues: MFEQRVNSDVLTVSTVNSQDQVTQKPLRDSVKQALKNYFAQLNGQDVNDLYELVLAEVEQPLLDMVMQYTRGNQTRAALMMGINRGTLRKKLK.

Positions 74 to 93 form a DNA-binding region, H-T-H motif; the sequence is QTRAALMMGINRGTLRKKLK.

This sequence belongs to the transcriptional regulatory Fis family. Homodimer.

Its function is as follows. Activates ribosomal RNA transcription. Plays a direct role in upstream activation of rRNA promoters. This chain is DNA-binding protein Fis, found in Klebsiella pneumoniae.